A 343-amino-acid chain; its full sequence is Heat-inducible transcription repressor HrcA (343 aa).

It belongs to the HrcA family.

In terms of biological role, negative regulator of class I heat shock genes (grpE-dnaK-dnaJ and groELS operons). Prevents heat-shock induction of these operons. The sequence is that of Heat-inducible transcription repressor HrcA from Lysinibacillus sphaericus (Bacillus sphaericus).